Reading from the N-terminus, the 66-residue chain is Large ribosomal subunit protein bL32 (66 aa).

Positions 1 to 19 are enriched in basic residues; that stretch reads MAIVPKRKTSKQRKHKRNT. Positions 1-21 are disordered; the sequence is MAIVPKRKTSKQRKHKRNTHS.

It belongs to the bacterial ribosomal protein bL32 family.

The chain is Large ribosomal subunit protein bL32 from Mycoplasmopsis synoviae (strain 53) (Mycoplasma synoviae).